A 395-amino-acid polypeptide reads, in one-letter code: Elongation factor Tu (395 aa).

Residues 10–204 (KPHVNIGTIG…EVDAYIPTPE (195 aa)) enclose the tr-type G domain. The interval 19 to 26 (GHVDHGKT) is G1. Position 19–26 (19–26 (GHVDHGKT)) interacts with GTP. Position 26 (Thr26) interacts with Mg(2+). A G2 region spans residues 60-64 (GITIS). The G3 stretch occupies residues 81–84 (DCPG). GTP-binding positions include 81–85 (DCPGH) and 136–139 (NKCD). Residues 136-139 (NKCD) are G4. Positions 174-176 (SAL) are G5.

The protein belongs to the TRAFAC class translation factor GTPase superfamily. Classic translation factor GTPase family. EF-Tu/EF-1A subfamily. Monomer.

The protein localises to the cytoplasm. It catalyses the reaction GTP + H2O = GDP + phosphate + H(+). GTP hydrolase that promotes the GTP-dependent binding of aminoacyl-tRNA to the A-site of ribosomes during protein biosynthesis. In Bacillus cereus (strain ATCC 10987 / NRS 248), this protein is Elongation factor Tu.